The chain runs to 240 residues: Glutathione-independent glyoxalase hsp3102 (240 aa).

Catalysis depends on residues Cys-141, His-142, and Glu-175.

The protein belongs to the peptidase C56 family. HSP31-like subfamily.

The protein localises to the cytoplasm. It localises to the nucleus. It catalyses the reaction methylglyoxal + H2O = (R)-lactate + H(+). Its function is as follows. Catalyzes the conversion of methylglyoxal (MG) to D-lactate in a single glutathione (GSH)-independent step. May play a role in detoxifying endogenously produced glyoxals. Involved in protection against reactive oxygen species (ROS). The chain is Glutathione-independent glyoxalase hsp3102 from Schizosaccharomyces pombe (strain 972 / ATCC 24843) (Fission yeast).